Reading from the N-terminus, the 809-residue chain is Carbon monoxide dehydrogenase large chain (809 aa).

Cys-388 is a binding site for Cu(+). Glu-763 contacts Mo-molybdopterin cytosine dinucleotide.

Dimer of heterotrimers. Each heterotrimer consists of a large, a medium and a small subunit. The cofactor is Cu(+). Requires Mo-molybdopterin cytosine dinucleotide as cofactor.

It catalyses the reaction CO + a quinone + H2O = a quinol + CO2. In terms of biological role, catalyzes the oxidation of carbon monoxide to carbon dioxide. The polypeptide is Carbon monoxide dehydrogenase large chain (coxL) (Afipia carboxidovorans (strain ATCC 49405 / DSM 1227 / KCTC 32145 / OM5) (Oligotropha carboxidovorans)).